The sequence spans 186 residues: UPF0301 protein CGSHiEE_01530 (186 aa).

It belongs to the UPF0301 (AlgH) family.

This Haemophilus influenzae (strain PittEE) protein is UPF0301 protein CGSHiEE_01530.